The primary structure comprises 431 residues: Adenylosuccinate synthetase (431 aa).

Residues 13-19 (GDEGKGK) and 41-43 (GHT) each bind GTP. Asp-14 serves as the catalytic Proton acceptor. Mg(2+) is bound by residues Asp-14 and Gly-41. IMP is bound by residues 14-17 (DEGK), 39-42 (NAGH), Thr-130, Arg-144, Gln-225, Thr-240, and Arg-304. The active-site Proton donor is His-42. A substrate-binding site is contributed by 300-306 (ATTGRAR). Residues Arg-306, 332–334 (KLD), and 415–417 (STG) contribute to the GTP site.

Belongs to the adenylosuccinate synthetase family. In terms of assembly, homodimer. Requires Mg(2+) as cofactor.

Its subcellular location is the cytoplasm. It catalyses the reaction IMP + L-aspartate + GTP = N(6)-(1,2-dicarboxyethyl)-AMP + GDP + phosphate + 2 H(+). It functions in the pathway purine metabolism; AMP biosynthesis via de novo pathway; AMP from IMP: step 1/2. Functionally, plays an important role in the de novo pathway of purine nucleotide biosynthesis. Catalyzes the first committed step in the biosynthesis of AMP from IMP. This is Adenylosuccinate synthetase from Ectopseudomonas mendocina (strain ymp) (Pseudomonas mendocina).